Here is a 389-residue protein sequence, read N- to C-terminus: Histidinol-phosphate aminotransferase (389 aa).

Lysine 233 is modified (N6-(pyridoxal phosphate)lysine).

Belongs to the class-II pyridoxal-phosphate-dependent aminotransferase family. The cofactor is pyridoxal 5'-phosphate.

The enzyme catalyses L-histidinol phosphate + 2-oxoglutarate = 3-(imidazol-4-yl)-2-oxopropyl phosphate + L-glutamate. It participates in amino-acid biosynthesis; L-histidine biosynthesis; L-histidine from 5-phospho-alpha-D-ribose 1-diphosphate: step 7/9. This is Histidinol-phosphate aminotransferase (HIS5) from Candida maltosa (Yeast).